Consider the following 212-residue polypeptide: Cytidylate kinase (212 aa).

An ATP-binding site is contributed by 7 to 15; it reads GPAASGKGT.

This sequence belongs to the cytidylate kinase family. Type 1 subfamily.

The protein localises to the cytoplasm. It carries out the reaction CMP + ATP = CDP + ADP. The catalysed reaction is dCMP + ATP = dCDP + ADP. The protein is Cytidylate kinase of Nitrobacter winogradskyi (strain ATCC 25391 / DSM 10237 / CIP 104748 / NCIMB 11846 / Nb-255).